We begin with the raw amino-acid sequence, 178 residues long: Ribosome maturation factor RimP (178 aa).

The protein belongs to the RimP family.

The protein localises to the cytoplasm. Required for maturation of 30S ribosomal subunits. The chain is Ribosome maturation factor RimP from Cutibacterium acnes (strain DSM 16379 / KPA171202) (Propionibacterium acnes).